The primary structure comprises 114 residues: Protein ELF4-LIKE 4 (114 aa).

Positions 87–114 (SVDASSEGESSGTLKSDGKANQKRFRSG) are disordered. Positions 89–100 (DASSEGESSGTL) are enriched in polar residues.

This sequence belongs to the EARLY FLOWERING 4 family. In terms of assembly, homodimer.

It is found in the nucleus. Its function is as follows. Component of the central CCA1/LHY-TOC1 feedback loop in the circadian clock that promotes clock accuracy and is required for sustained rhythms in the absence of daily light/dark cycles. The sequence is that of Protein ELF4-LIKE 4 (EFL4) from Arabidopsis thaliana (Mouse-ear cress).